The sequence spans 605 residues: F-box/WD repeat-containing protein 1A (605 aa).

The segment at 128 to 177 (ASYEKEKELCVKYFEQWSESDQVEFVEHLISQMCHYQHGHINSYLKPMLQ) is homodimerization domain D. In terms of domain architecture, F-box spans 182 to 228 (TALPARGLDHIAENILSYLDAKSLCAAELVCKEWYRVTSDGMLWKKL). Residues 190 to 228 (DHIAENILSYLDAKSLCAAELVCKEWYRVTSDGMLWKKL) are required for down-regulation of SNAI1. 7 WD repeats span residues 301 to 338 (ETSKGVYCLQYDDQKIVSGLRDNTIKIWDKSTLECKRI), 341 to 378 (GHTGSVLCLQYDERVIITGSSDSTVRVWDVNAGEMLNT), 381 to 418 (HHCEAVLHLRFNNGMMVTCSKDRSIAVWDMASPTDITL), 424 to 461 (GHRAAVNVVDFDDKYIVSASGDRTIKVWNTSTCEFVRT), 464 to 503 (GHKRGIACLQYRDRLVVSGSSDNTIRLWDIECGACLRVLE), 505 to 541 (HEELVRCIRFDNKRIVSGAYDGKIKVWDLMAALDPRA), and 553 to 590 (EHSGRVFRLQFDEFQIVSSSHDDTILIWDFLNDPAAHA).

In terms of assembly, homodimer. Self-associates. Component of the SCF(BTRC) complex, composed of SKP1, CUL1 and BTRC. Direct interaction with SKP1 with SKP1 occurs via the F-box domain. Interacts with phosphorylated ubiquitination substrates SMAD3 and SMAD4. Interacts with phosphorylated ubiquitination substrates CTNNB1, NFKBIA, NFKBIB, NFKBIE, NFKB1/nuclear factor NF-kappa-B p105 subunit, ATF4, CDC25A, DLG1, FBXO5 and SNAI1; the interaction requires the phosphorylation of the 2 serine residues in the substrate destruction motif D-S-G-X(2,3,4)-S. Binds UBQLN1. Interacts with CDC34 and UBE2R2. Interacts with FBXW11. Interacts with CUL4A and DDB1. Part of a SCF(BTRC)-like complex lacking CUL1, which is associated with phosphorylated NKBIA and RELA; RELA interacts directly with NFKBIA. Interacts with the phosphorylated form of GLI3. Interacts with CLU. Interacts with PER1 (phosphorylated), PER2 (phosphorylated) and PER3. Interacts with phosphorylated ubiquitination substrate CEP68. Interacts with ZC3H12A; this interaction occurs when ZC3H12A is phosphorylated in a IKBKB/IKKB-dependent manner. Interacts with HSF1; this interaction occurs during mitosis and induces HSF1 ubiquitin-dependent degradation, a process inhibited by CDC20. Interacts with NFE2L1. Interacts with INAVA. Interacts with IL10RA; this interaction leads to IL10RA ubiquitination and subsequent degradation. Interacts with REST. Interacts with KLF4; this interaction leads to KLF4 ubiquitination and subsequent degradation. Interacts with UBR2, as part of a SCF(BTRC) complex; the interaction mediates 'Lys-48'-linked ubiquitination of UBR2 and is regulated by DUSP22 in the T-cell receptor signaling pathway. Ubiquitinated via 'Lys-11'-linked polyubiquitin by some cullin-5-RING E3 ubiquitin-protein ligase complex (ECS complex), leading to its degradation. Deubiquitinated by OTUD5, promoting its stability. As to expression, expressed in heart, brain, liver, skeletal muscle and, most strongly, in testis.

It is found in the cytoplasm. Its subcellular location is the nucleus. It functions in the pathway protein modification; protein ubiquitination. In terms of biological role, substrate recognition component of a SCF (SKP1-CUL1-F-box protein) E3 ubiquitin-protein ligase complex which mediates the ubiquitination and subsequent proteasomal degradation of target proteins. Recognizes and binds to phosphorylated target proteins. SCF(BTRC) mediates the ubiquitination of phosphorylated NFKB, ATF4, CDC25A, DLG1, FBXO5, PER1, SMAD3, SMAD4, SNAI1 and probably NFKB2. SCF(BTRC) mediates the ubiquitination of CTNNB1 and participates in Wnt signaling. SCF(BTRC) mediates the ubiquitination of NFKBIA, NFKBIB and NFKBIE; the degradation frees the associated NFKB1 to translocate into the nucleus and to activate transcription. Ubiquitination of NFKBIA occurs at 'Lys-21' and 'Lys-22'. The SCF(FBXW11) complex also regulates NF-kappa-B by mediating ubiquitination of phosphorylated NFKB1: specifically ubiquitinates the p105 form of NFKB1, leading to its degradation. SCF(BTRC) mediates the ubiquitination of CEP68; this is required for centriole separation during mitosis. SCF(BTRC) mediates the ubiquitination and subsequent degradation of nuclear NFE2L1. Has an essential role in the control of the clock-dependent transcription via degradation of phosphorylated PER1 and PER2. May be involved in ubiquitination and subsequent proteasomal degradation through a DBB1-CUL4 E3 ubiquitin-protein ligase. Required for activation of NFKB-mediated transcription by IL1B, MAP3K14, MAP3K1, IKBKB and TNF. Required for proteolytic processing of GLI3. Mediates ubiquitination of REST, thereby leading to its proteasomal degradation. SCF(BTRC) mediates the ubiquitination and subsequent proteasomal degradation of KLF4; thereby negatively regulating cell pluripotency maintenance and embryogenesis. SCF(BTRC) acts as a regulator of mTORC1 signaling pathway by catalyzing ubiquitination and subsequent proteasomal degradation of phosphorylated DEPTOR, TFE3 and MITF. SCF(BTRC) directs 'Lys-48'-linked ubiquitination of UBR2 in the T-cell receptor signaling pathway. In Mus musculus (Mouse), this protein is F-box/WD repeat-containing protein 1A.